The chain runs to 466 residues: Cysteine--tRNA ligase (466 aa).

Position 28 (C28) interacts with Zn(2+). The short motif at 30-40 (PTVYNYIHIGN) is the 'HIGH' region element. Zn(2+) is bound by residues C208, H233, and E237. Positions 265–269 (KMSKS) match the 'KMSKS' region motif. Residue K268 coordinates ATP.

Belongs to the class-I aminoacyl-tRNA synthetase family. In terms of assembly, monomer. Zn(2+) is required as a cofactor.

It localises to the cytoplasm. The catalysed reaction is tRNA(Cys) + L-cysteine + ATP = L-cysteinyl-tRNA(Cys) + AMP + diphosphate. The chain is Cysteine--tRNA ligase from Staphylococcus aureus (strain MSSA476).